Here is a 431-residue protein sequence, read N- to C-terminus: Enolase (431 aa).

Glutamine 166 is a binding site for (2R)-2-phosphoglycerate. Residue glutamate 208 is the Proton donor of the active site. Residues aspartate 245, glutamate 288, and aspartate 315 each coordinate Mg(2+). Residues lysine 340, arginine 369, serine 370, and lysine 391 each coordinate (2R)-2-phosphoglycerate. Residue lysine 340 is the Proton acceptor of the active site.

Belongs to the enolase family. Requires Mg(2+) as cofactor.

It localises to the cytoplasm. It is found in the secreted. The protein resides in the cell surface. It carries out the reaction (2R)-2-phosphoglycerate = phosphoenolpyruvate + H2O. The protein operates within carbohydrate degradation; glycolysis; pyruvate from D-glyceraldehyde 3-phosphate: step 4/5. In terms of biological role, catalyzes the reversible conversion of 2-phosphoglycerate (2-PG) into phosphoenolpyruvate (PEP). It is essential for the degradation of carbohydrates via glycolysis. The chain is Enolase from Clostridium tetani (strain Massachusetts / E88).